A 183-amino-acid polypeptide reads, in one-letter code: Nucleoside triphosphate pyrophosphatase (183 aa).

Catalysis depends on aspartate 71, which acts as the Proton acceptor.

This sequence belongs to the Maf family. A divalent metal cation serves as cofactor.

It is found in the cytoplasm. The catalysed reaction is a ribonucleoside 5'-triphosphate + H2O = a ribonucleoside 5'-phosphate + diphosphate + H(+). It catalyses the reaction a 2'-deoxyribonucleoside 5'-triphosphate + H2O = a 2'-deoxyribonucleoside 5'-phosphate + diphosphate + H(+). Functionally, nucleoside triphosphate pyrophosphatase. May have a dual role in cell division arrest and in preventing the incorporation of modified nucleotides into cellular nucleic acids. This chain is Nucleoside triphosphate pyrophosphatase, found in Campylobacter jejuni subsp. jejuni serotype O:6 (strain 81116 / NCTC 11828).